A 64-amino-acid chain; its full sequence is Beta-insect excitatory toxin OdTx12 (64 aa).

The 59-residue stretch at 1–59 folds into the LCN-type CS-alpha/beta domain; the sequence is QSTGGKAPECLLSNYCNNECTKVHYADKGYCCLLSCYCFGLSDDKKVLEISDSRKKYCD. Disulfide bonds link C10–C31, C16–C36, C20–C38, and C32–C58.

Belongs to the long (4 C-C) scorpion toxin superfamily. Sodium channel inhibitor family. Beta subfamily. Expressed by the venom gland.

It is found in the secreted. Its function is as follows. Excitatory insect beta-toxins induce a spastic paralysis. They bind voltage-independently at site-4 of sodium channels (Nav) and shift the voltage of activation toward more negative potentials thereby affecting sodium channel activation and promoting spontaneous and repetitive firing. In vivo, this recombinant protein is lethal to Locusta migratoria larvae after injection, but has no significant effect when orally administered. Is not toxic to mice after intracerebroventricular injection. The protein is Beta-insect excitatory toxin OdTx12 of Odontobuthus doriae (Yellow Iranian scorpion).